A 325-amino-acid chain; its full sequence is Protein FAM50B (325 aa).

A2 bears the N-acetylalanine mark. Disordered stretches follow at residues 92–111 and 137–160; these read QHLE…EQRR and RRAG…DREE.

This sequence belongs to the FAM50 family. Widely expressed. Mostly abundant in testis and adult and fetal brain.

In Homo sapiens (Human), this protein is Protein FAM50B (FAM50B).